Here is a 430-residue protein sequence, read N- to C-terminus: Ribosomal protein uS12 methylthiotransferase RimO (430 aa).

One can recognise an MTTase N-terminal domain in the interval 2-119 (ISVYSISLGC…WPAMLAHALK (118 aa)). 6 residues coordinate [4Fe-4S] cluster: Cys-11, Cys-46, Cys-81, Cys-145, Cys-149, and Cys-152. One can recognise a Radical SAM core domain in the interval 131–361 (STGPSYAWLK…MEVQAEISEE (231 aa)). The 67-residue stretch at 364 to 430 (AVHEGTRQQV…TRTYDLVALV (67 aa)) folds into the TRAM domain.

The protein belongs to the methylthiotransferase family. RimO subfamily. Requires [4Fe-4S] cluster as cofactor.

The protein localises to the cytoplasm. It carries out the reaction L-aspartate(89)-[ribosomal protein uS12]-hydrogen + (sulfur carrier)-SH + AH2 + 2 S-adenosyl-L-methionine = 3-methylsulfanyl-L-aspartate(89)-[ribosomal protein uS12]-hydrogen + (sulfur carrier)-H + 5'-deoxyadenosine + L-methionine + A + S-adenosyl-L-homocysteine + 2 H(+). Its function is as follows. Catalyzes the methylthiolation of an aspartic acid residue of ribosomal protein uS12. The polypeptide is Ribosomal protein uS12 methylthiotransferase RimO (Nitratidesulfovibrio vulgaris (strain DP4) (Desulfovibrio vulgaris)).